The following is a 327-amino-acid chain: Aldo-keto reductase family 7 member A3 (327 aa).

Position 2 is a phosphoserine (Ser2). Residues Met13, Arg18, and Asp40 each coordinate NADP(+). Residue Tyr45 is the Proton donor of the active site. Residue His109 coordinates citrate. Asn140, Asn194, Leu196, Gly198, Arg204, and Arg218 together coordinate NADP(+). Tyr228 and Arg231 together coordinate citrate. Ser286, Gln290, Gln293, Asn294, and Arg327 together coordinate NADP(+).

The protein belongs to the aldo/keto reductase family. Aldo/keto reductase 2 subfamily. In terms of assembly, homodimer. Heterodimer with AKR7A2.

Its subcellular location is the cytoplasm. The enzyme catalyses a primary alcohol + NADP(+) = an aldehyde + NADPH + H(+). It catalyses the reaction aflatoxin B1 dialdehyde + NADPH + H(+) = aflatoxin B1 C(6a)-monoaldehyde + NADP(+). It carries out the reaction aflatoxin B1 dialdehyde + NADPH + H(+) = aflatoxin B1 C(8)-monoaldehyde + NADP(+). The catalysed reaction is aflatoxin B1 C(6a)-monoaldehyde + NADPH + 2 H(+) = aflatoxin B1 triol + NADP(+). With respect to regulation, inhibited by citrate. Its function is as follows. Catalyzes the NADPH-dependent reduction of various carbonyl-containing compounds, including aldehydes, ketones, and toxic products from cellular metabolism or environmental exposure. Can reduce the dialdehyde form of aflatoxin B1 (AFB1) into alcohol derivatives, via monoaldehydes intermediates, thus preventing the formation of protein adducts that contribute to AFB1-induced toxicity. The protein is Aldo-keto reductase family 7 member A3 of Rattus norvegicus (Rat).